A 500-amino-acid polypeptide reads, in one-letter code: Recombining binding protein suppressor of hairless (500 aa).

Residues 1–30 form a disordered region; that stretch reads MDHTEGSPAEEPPAHAPSPGKFGERPPPKR. 2 DNA-binding regions span residues 57 to 67 and 165 to 170; these read QKSYGNEKRFF and SKPSKK. N6-acetyllysine is present on lysine 175. The DNA-binding stretch occupies residues 192–197; it reads RLRSQT. Residues 355–445 enclose the IPT/TIG domain; the sequence is PVVESLQLNG…YSTSLTFTYT (91 aa). Residues 465–481 show a composition bias toward polar residues; that stretch reads SSQVPPNESNTNSEGSY. Positions 465 to 500 are disordered; sequence SSQVPPNESNTNSEGSYTNASTNSTSVTSSTATVVS. The segment covering 482–500 has biased composition (low complexity); sequence TNASTNSTSVTSSTATVVS.

The protein belongs to the Su(H) family. As to quaternary structure, interacts with activated NOTCH1, NOTCH2 or NOTCH3. Interacts with MINT/SHARP. This interaction may mediate the recruitment of large corepressor complexes containing proteins such as HDAC1, HDAC2, NCOR2, SAP30, FHL1/KYOT2 and CIR1. Interacts with EP300, MAML1 and PTF1A. Interacts with RITA1/C12orf52, leading to nuclear export, prevent the interaction between RBPJ and NICD product and subsequent down-regulation of the Notch signaling pathway. Interacts with SNW1. Interacts with CHCHD2 and CXXC5. Interacts with BEND6 (via BEN domain). Interacts with NKAPL. Interacts with ZMIZ1. Interacts with RBM15. Interacts with L3MBTL3 and KDM1A; the interaction with KDM1A is weaker in the absence of L3MBTL3 and the interaction with L3MBTL3 is impaired by Notch-derived peptide containing the intracellular domain (NICD). In terms of assembly, (Microbial infection) Interacts with EBV EBNA2. Interacts with EBV EBNA3. Interacts with EBV EBNA4. Interacts with EBV EBNA6 (via N-terminus).

It localises to the nucleus. The protein localises to the cytoplasm. Its function is as follows. Transcriptional regulator that plays a central role in Notch signaling, a signaling pathway involved in cell-cell communication that regulates a broad spectrum of cell-fate determinations. Acts as a transcriptional repressor when it is not associated with Notch proteins. When associated with some NICD product of Notch proteins (Notch intracellular domain), it acts as a transcriptional activator that activates transcription of Notch target genes. Probably represses or activates transcription via the recruitment of chromatin remodeling complexes containing histone deacetylase or histone acetylase proteins, respectively. Specifically binds to the immunoglobulin kappa-type J segment recombination signal sequence. Binds specifically to methylated DNA. Binds to the oxygen responsive element of COX4I2 and activates its transcription under hypoxia conditions (4% oxygen). Negatively regulates the phagocyte oxidative burst in response to bacterial infection by repressing transcription of NADPH oxidase subunits. The polypeptide is Recombining binding protein suppressor of hairless (Homo sapiens (Human)).